The following is a 326-amino-acid chain: Probable 9-O-acetyl-N-acetylneuraminic acid deacetylase (326 aa).

Positions 1-21 (MNAIISPDYYYVLTVAGQSNA) are cleaved as a signal peptide.

The protein resides in the periplasm. Probably catalyzes the hydrolysis of the 9-O-acetyl group of 9-O-acetyl-N-acetylneuraminate (Neu5,9Ac2). Is required for growth of E.coli on Neu5,9Ac2, an alternative sialic acid commonly found in mammalian host mucosal sites, in particular in the human intestine. The polypeptide is Probable 9-O-acetyl-N-acetylneuraminic acid deacetylase (nanS) (Escherichia coli (strain K12)).